The chain runs to 274 residues: 2,3,4,5-tetrahydropyridine-2,6-dicarboxylate N-succinyltransferase (274 aa).

The substrate site is built by arginine 107 and aspartate 144.

This sequence belongs to the transferase hexapeptide repeat family. Homotrimer.

Its subcellular location is the cytoplasm. It carries out the reaction (S)-2,3,4,5-tetrahydrodipicolinate + succinyl-CoA + H2O = (S)-2-succinylamino-6-oxoheptanedioate + CoA. It participates in amino-acid biosynthesis; L-lysine biosynthesis via DAP pathway; LL-2,6-diaminopimelate from (S)-tetrahydrodipicolinate (succinylase route): step 1/3. The chain is 2,3,4,5-tetrahydropyridine-2,6-dicarboxylate N-succinyltransferase from Cereibacter sphaeroides (strain ATCC 17029 / ATH 2.4.9) (Rhodobacter sphaeroides).